The chain runs to 265 residues: Cytochrome c oxidase subunit 3 (265 aa).

The next 7 helical transmembrane spans lie at 16–36, 41–61, 84–104, 137–157, 162–182, 200–220, and 245–265; these read PWPI…VMYM, GGAT…FVWW, YGSI…FWAS, TPIL…ILAG, AVYA…FQGM, FYLA…FSII, and WHFV…WGGI.

Belongs to the cytochrome c oxidase subunit 3 family. Component of the cytochrome c oxidase (complex IV, CIV), a multisubunit enzyme composed of a catalytic core of 3 subunits and several supernumerary subunits. The complex exists as a monomer or a dimer and forms supercomplexes (SCs) in the inner mitochondrial membrane with ubiquinol-cytochrome c oxidoreductase (cytochrome b-c1 complex, complex III, CIII).

It localises to the mitochondrion inner membrane. It catalyses the reaction 4 Fe(II)-[cytochrome c] + O2 + 8 H(+)(in) = 4 Fe(III)-[cytochrome c] + 2 H2O + 4 H(+)(out). Its function is as follows. Component of the cytochrome c oxidase, the last enzyme in the mitochondrial electron transport chain which drives oxidative phosphorylation. The respiratory chain contains 3 multisubunit complexes succinate dehydrogenase (complex II, CII), ubiquinol-cytochrome c oxidoreductase (cytochrome b-c1 complex, complex III, CIII) and cytochrome c oxidase (complex IV, CIV), that cooperate to transfer electrons derived from NADH and succinate to molecular oxygen, creating an electrochemical gradient over the inner membrane that drives transmembrane transport and the ATP synthase. Cytochrome c oxidase is the component of the respiratory chain that catalyzes the reduction of oxygen to water. Electrons originating from reduced cytochrome c in the intermembrane space (IMS) are transferred via the dinuclear copper A center (CU(A)) of subunit 2 and heme A of subunit 1 to the active site in subunit 1, a binuclear center (BNC) formed by heme A3 and copper B (CU(B)). The BNC reduces molecular oxygen to 2 water molecules using 4 electrons from cytochrome c in the IMS and 4 protons from the mitochondrial matrix. The polypeptide is Cytochrome c oxidase subunit 3 (COX3) (Oenothera berteroana (Bertero's evening primrose)).